A 144-amino-acid polypeptide reads, in one-letter code: MFRRSVSFVRSHVLRSFSSQPVVPVTPIVKNPASQGAGTIKLEQSTVELLERLSLVDFSNAEAVSRLEEAVKFASVIMNVDTTGVRPMVTPLEDTVLRLRDDVAEKCSSEDVLKNAAVIEEDYFVAPPGNIPLEPKANYGLGNS.

A mitochondrion-targeting transit peptide spans 1 to 17 (MFRRSVSFVRSHVLRSF).

The protein belongs to the GatC family. As to quaternary structure, subunit of the heterotrimeric GatCAB amidotransferase (AdT) complex, composed of A, B and C subunits.

Its subcellular location is the mitochondrion. It catalyses the reaction L-glutamyl-tRNA(Gln) + L-glutamine + ATP + H2O = L-glutaminyl-tRNA(Gln) + L-glutamate + ADP + phosphate + H(+). In terms of biological role, allows the formation of correctly charged Gln-tRNA(Gln) through the transamidation of misacylated Glu-tRNA(Gln) in the mitochondria. The reaction takes place in the presence of glutamine and ATP through an activated gamma-phospho-Glu-tRNA(Gln). The chain is Glutamyl-tRNA(Gln) amidotransferase subunit C, mitochondrial from Ixodes scapularis (Black-legged tick).